The chain runs to 176 residues: Jacalin-related lectin 19 (176 aa).

Residues 12–154 (TVFVGPWGGN…LDSIGFHLSR (143 aa)) enclose the Jacalin-type lectin domain.

This sequence belongs to the jacalin lectin family.

This is Jacalin-related lectin 19 (JAL19) from Arabidopsis thaliana (Mouse-ear cress).